The following is a 130-amino-acid chain: Probable 4-amino-4-deoxy-L-arabinose-phosphoundecaprenol flippase subunit ArnF (130 aa).

Residues 1 to 4 (MGYG) lie on the Cytoplasmic side of the membrane. A helical membrane pass occupies residues 5–25 (WALFSVALVSAAQLLLKWVMM). The Periplasmic segment spans residues 26–44 (HLPPLGALRLWLDPAYAEP). A helical transmembrane segment spans residues 45–65 (LALLMGGLLAYVCSMGCWFMA). Topologically, residues 66–74 (LRRLPLNKA) are cytoplasmic. The helical transmembrane segment at 75-95 (YPLLSLSYVLVAACALMIPEF) threads the bilayer. The Periplasmic segment spans residues 96-103 (NERFTFSR). A helical transmembrane segment spans residues 104-124 (LMGVALICGGLLLICLPAGGK). The Cytoplasmic segment spans residues 125-130 (GDTPRR).

Belongs to the ArnF family. In terms of assembly, heterodimer of ArnE and ArnF.

The protein localises to the cell inner membrane. The protein operates within bacterial outer membrane biogenesis; lipopolysaccharide biosynthesis. In terms of biological role, translocates 4-amino-4-deoxy-L-arabinose-phosphoundecaprenol (alpha-L-Ara4N-phosphoundecaprenol) from the cytoplasmic to the periplasmic side of the inner membrane. The protein is Probable 4-amino-4-deoxy-L-arabinose-phosphoundecaprenol flippase subunit ArnF of Sodalis glossinidius (strain morsitans).